Here is a 548-residue protein sequence, read N- to C-terminus: tRNA (guanine(26)-N(2))-dimethyltransferase (548 aa).

The region spanning 30 to 470 (ASLTEGSAII…APWSFVWDVL (441 aa)) is the Trm1 methyltransferase domain. S-adenosyl-L-methionine-binding residues include R57, R137, D155, and A186. Zn(2+) is bound by residues C317, C320, C354, and C357. A disordered region spans residues 523-548 (QMNPTENWGPKSKPGKRTIAEVDSKS).

The protein belongs to the class I-like SAM-binding methyltransferase superfamily. Trm1 family.

The protein localises to the mitochondrion. It is found in the nucleus. The protein resides in the cytoplasm. The enzyme catalyses guanosine(26) in tRNA + 2 S-adenosyl-L-methionine = N(2)-dimethylguanosine(26) in tRNA + 2 S-adenosyl-L-homocysteine + 2 H(+). Functionally, dimethylates a single guanine residue at position 26 of nuclear- and mitochondrial-encoded tRNAs using S-adenosyl-L-methionine as donor of the methyl groups. Also has tRNA strand annealing and dissociation activity independently of its tRNA guanine-dimethyltransferase activity. The chain is tRNA (guanine(26)-N(2))-dimethyltransferase from Schizosaccharomyces pombe (strain 972 / ATCC 24843) (Fission yeast).